We begin with the raw amino-acid sequence, 295 residues long: MAAVSSVASLRGADYENGLRGGAGPSGGGQDPGEDDPMGRGTLDLDLELLTQGRRNRRVGGRTAPGRRSGGRGGSGGGAGGLEELEDEELEEEEPGELTGDQTIEDPELEAIKARVREMEEEAEKLKELQNEVEKQMNMSPPPGNAGPVIMSVEEKMEADARSIYVGNVDYGATAEELEAHFHGCGSVNRVTILCDKFTGHPKGFAYIEFSDKESVRTSLALDESLFRGRQIKVVPKRTNRPGISTTDRGFPRARYRARASSYSSRSRFYSGYTPRPRGRVYRGRARATSWYTPY.

The segment at 1–102 is disordered; it reads MAAVSSVASL…EEPGELTGDQ (102 aa). Gly residues-rich tracts occupy residues 19–31 and 71–81; these read LRGG…GGQD and GRGGSGGGAGG. A compositionally biased stretch (acidic residues) spans 83–96; sequence EELEDEELEEEEPG. A coiled-coil region spans residues 106–140; it reads DPELEAIKARVREMEEEAEKLKELQNEVEKQMNMS. Residues 145-295 are necessary for homooligomerization; that stretch reads NAGPVIMSVE…ARATSWYTPY (151 aa). The region spanning 162–239 is the RRM domain; it reads RSIYVGNVDY…RQIKVVPKRT (78 aa).

As to quaternary structure, monomer and homooligomer. Binds RNA as a monomer and oligomerizes when bound to poly(A).

Its subcellular location is the nucleus. The protein resides in the cytoplasm. In terms of biological role, involved in the 3'-end formation of mRNA precursors (pre-mRNA) by the addition of a poly(A) tail of 200-250 nt to the upstream cleavage product. Stimulates poly(A) polymerase (PAPOLA) conferring processivity on the poly(A) tail elongation reaction and also controls the poly(A) tail length. Increases the affinity of poly(A) polymerase for RNA. Binds to poly(A) and to poly(G) with high affinity. May protect the poly(A) tail from degradation. This chain is Polyadenylate-binding protein 2-B (pabpn1-b), found in Xenopus laevis (African clawed frog).